Here is a 265-residue protein sequence, read N- to C-terminus: Flavin-dependent thymidylate synthase (265 aa).

One can recognise a ThyX domain in the interval 11–224; it reads GFLKLIDFMG…PIAFNSFENH (214 aa). FAD-binding positions include Ser-56, 79–81, and Glu-87; that span reads RHR. 76–79 lines the dUMP pocket; it reads QWMR. The ThyX motif signature appears at 79–89; that stretch reads RHRTARINEVS. Residue Arg-155 coordinates dUMP. Residues 171-173 and His-177 contribute to the FAD site; that span reads DLN. Residue Arg-182 participates in dUMP binding. Residue Arg-182 is the Involved in ionization of N3 of dUMP, leading to its activation of the active site.

Belongs to the thymidylate synthase ThyX family. In terms of assembly, homotetramer. Requires FAD as cofactor.

The catalysed reaction is dUMP + (6R)-5,10-methylene-5,6,7,8-tetrahydrofolate + NADPH + H(+) = dTMP + (6S)-5,6,7,8-tetrahydrofolate + NADP(+). The protein operates within pyrimidine metabolism; dTTP biosynthesis. In terms of biological role, catalyzes the reductive methylation of 2'-deoxyuridine-5'-monophosphate (dUMP) to 2'-deoxythymidine-5'-monophosphate (dTMP) while utilizing 5,10-methylenetetrahydrofolate (mTHF) as the methyl donor, and NADPH and FADH(2) as the reductant. This is Flavin-dependent thymidylate synthase from Borreliella burgdorferi (strain ATCC 35210 / DSM 4680 / CIP 102532 / B31) (Borrelia burgdorferi).